Consider the following 595-residue polypeptide: Probable carotenoid cleavage dioxygenase 4, chloroplastic (595 aa).

The transit peptide at 1–34 (MDSVSSSSFLSSTFSLHHSLLRRRSSSPTLLRIN) directs the protein to the chloroplast. Positions 41–74 (RSPITNPSDNNDRRNKPKTLHNRTNHTLVSSPPK) are disordered. The segment covering 55 to 64 (NKPKTLHNRT) has biased composition (basic residues). Residues histidine 287, histidine 336, histidine 404, and histidine 583 each coordinate Fe cation.

This sequence belongs to the carotenoid oxygenase family. As to quaternary structure, interacts with VAR3. Interacts with PGM48. Fe(2+) is required as a cofactor. Mostly expressed in flowers (e.g. sepals and petals), siliques, seeds, leaves and cotyledons.

It is found in the plastid. The protein resides in the chloroplast. It localises to the plastoglobule. In terms of biological role, may be involved in carotenoid cleavage. The chain is Probable carotenoid cleavage dioxygenase 4, chloroplastic (CCD4) from Arabidopsis thaliana (Mouse-ear cress).